A 645-amino-acid polypeptide reads, in one-letter code: uncharacterized protein (645 aa).

This sequence belongs to the mycobacterial PPE family.

This is an uncharacterized protein from Mycobacterium tuberculosis (strain CDC 1551 / Oshkosh).